The chain runs to 406 residues: Probable mannan endo-1,4-beta-mannosidase C (406 aa).

Positions 1-20 are cleaved as a signal peptide; that stretch reads MLINFEKVLSLALLAGSVSG. Asn58 carries N-linked (GlcNAc...) asparagine glycosylation. Residue Trp80 participates in substrate binding. N-linked (GlcNAc...) asparagine glycosylation is found at Asn86 and Asn114. Asn201 contacts substrate. Glu202 functions as the Proton donor in the catalytic mechanism. Tyr287 provides a ligand contact to substrate. The active-site Nucleophile is the Glu320. An N-linked (GlcNAc...) asparagine glycan is attached at Asn338. Trp362 contributes to the substrate binding site.

Belongs to the glycosyl hydrolase 5 (cellulase A) family.

The protein resides in the secreted. The enzyme catalyses Random hydrolysis of (1-&gt;4)-beta-D-mannosidic linkages in mannans, galactomannans and glucomannans.. In terms of biological role, endo-1,4-mannanase, a crucial enzyme for depolymerization of seed galactomannans and wood galactoglucomannans. The protein is Probable mannan endo-1,4-beta-mannosidase C (manC) of Aspergillus terreus (strain NIH 2624 / FGSC A1156).